A 417-amino-acid chain; its full sequence is 2-oxoglutarate and iron-dependent oxygenase JMJD4 (417 aa).

In terms of domain architecture, JmjC spans 142 to 301 (CRDFPVEDVF…NMWRFLQQEL (160 aa)). Positions 189, 191, and 269 each coordinate Fe cation.

Belongs to the JMJD6 family. Interacts with ETF1. Interacts with the ETF1-GSPT1 complex. It depends on Fe(2+) as a cofactor.

The protein resides in the cytoplasm. It carries out the reaction L-lysyl-[protein] + 2-oxoglutarate + O2 = 4-hydroxy-L-lysyl-[protein] + succinate + CO2. Its function is as follows. Catalyzes the 2-oxoglutarate and iron-dependent C4-lysyl hydroxylation of ETF1 at 'Lys-63' thereby promoting the translational termination efficiency of ETF1. The protein is 2-oxoglutarate and iron-dependent oxygenase JMJD4 (JMJD4) of Homo sapiens (Human).